The sequence spans 311 residues: Malate dehydrogenase (311 aa).

NAD(+) is bound by residues 7–13 (GAAGGIG) and D34. The substrate site is built by R81 and R87. NAD(+)-binding positions include N94 and 117–119 (ITN). Substrate-binding residues include N119 and R153. H177 serves as the catalytic Proton acceptor. Residue M227 coordinates NAD(+).

The protein belongs to the LDH/MDH superfamily. MDH type 1 family. As to quaternary structure, homodimer.

It carries out the reaction (S)-malate + NAD(+) = oxaloacetate + NADH + H(+). Catalyzes the reversible oxidation of malate to oxaloacetate. The polypeptide is Malate dehydrogenase (Vibrio campbellii (strain ATCC BAA-1116)).